Reading from the N-terminus, the 1314-residue chain is Enfumafungin synthase efuA (1314 aa).

A terpenne cyclase region spans residues 1 to 680 (MPSYHNTDKT…RYIDKASRQG (680 aa)). 2 PFTB repeats span residues 19–62 (LQQA…ELSL) and 66–107 (GPEI…RILG). A run of 3 helical transmembrane segments spans residues 133 to 153 (FFTR…IPQM), 155 to 175 (AELI…SSWA), and 230 to 250 (YQWI…FGGL). A PFTB 3 repeat occupies 260–300 (LKRCTAWLLEHQEESGDWAGFFPPIHGSIWALLLDGFSFQS). Aspartate 395 functions as the Proton donor in the catalytic mechanism. 2 PFTB repeats span residues 417–458 (VMNG…DSLV) and 546–597 (CMRT…LRFR). Positions 681–1314 (IETLRIPSSS…ADSVLDIEEK (634 aa)) are glycosyltransferase. A helical transmembrane segment spans residues 1200 to 1220 (AIVQLLYGFTTTILALFGWLK). The interval 1289-1314 (DSGASESSRSSLDGGHADSVLDIEEK) is disordered. Over residues 1292-1302 (ASESSRSSLDG) the composition is skewed to low complexity.

In the N-terminal section; belongs to the terpene cyclase/mutase family. It in the C-terminal section; belongs to the glycosyltransferase 28 family.

It is found in the membrane. The protein operates within secondary metabolite biosynthesis; terpenoid biosynthesis. Terpene cyclase-glycosyl transferase fusion protein; part of the gene cluster that mediates the biosynthesis of enfumafungin, a glycosylated fernene-type triterpenoid with potent antifungal activity, mediated by its interaction with beta-1,3-glucan synthase and the fungal cell wall. The pathway begins with the terpene cyclase-glycosyl transferase fusion protein that most likely uses 2,3-oxidosqualene as substrate and catalyzes glycosylation immediately after cyclization. The fernene glycoside then could be processed by the desaturase efuI which catalyzes isomerization of a double bond established by efuA to form the core structure. The latter would then undergo a series of hydroxylations in unknown order at C-2, C-19, C-23 and C-25, which would be catalyzed by two of the three cytochrome P450 monooxygenases efuB, efuG or efuH. The hydroxy-group at C-25 becomes oxidized by the dehydrogenase efuE to enable a spontaneous, non-enzymatic hemiacetal formation with C-23. After hydroxylation at C-2, acetylation by the acetyltransferase efuC takes place. The final steps in enfumafungin biosynthesis require expansion of the 5-membered ring by lactonization via a Baeyer-Villiger reaction mediated by one of the BGC's cytochrome P450 monooxygenases (efuB, efuG or efuH) followed by ring cleavage. This type of reaction would establish a double bond between C-20 and C-21 which could be reduced by the reductase efuL to form the final product. In Hormonema carpetanum, this protein is Enfumafungin synthase efuA.